Reading from the N-terminus, the 310-residue chain is Fe-S cluster assembly protein dre2 (310 aa).

Disordered regions lie at residues 1-30 (MAPSFVSIDTTPDFDMTPTSSKSADSGKRT) and 165-184 (APAPAPVVQPPPIISSDDND). The tract at residues 24–154 (ADSGKRTLLL…KMDVGNGAAV (131 aa)) is N-terminal SAM-like domain. The tract at residues 155–202 (PLRLGRKKKAAPAPAPVVQPPPIISSDDNDLNDDELIDEDTLLSADDL) is linker. Residues 167–177 (APAPVVQPPPI) show a composition bias toward pro residues. Residues C212, C223, C226, and C228 each coordinate [2Fe-2S] cluster. The segment at 212-228 (CQPKAGKRRRACKDCTC) is fe-S binding site A. [4Fe-4S] cluster contacts are provided by C273, C276, C284, and C287. 2 consecutive short sequence motifs (cx2C motif) follow at residues 273 to 276 (CGNC) and 284 to 287 (CDGC). The segment at 273-287 (CGNCALGDAFRCDGC) is fe-S binding site B.

It belongs to the anamorsin family. Monomer. Interacts with tah18. Interacts with mia40. The cofactor is [2Fe-2S] cluster. [4Fe-4S] cluster serves as cofactor.

Its subcellular location is the cytoplasm. The protein resides in the mitochondrion intermembrane space. Component of the cytosolic iron-sulfur (Fe-S) protein assembly (CIA) machinery required for the maturation of extramitochondrial Fe-S proteins. Part of an electron transfer chain functioning in an early step of cytosolic Fe-S biogenesis, facilitating the de novo assembly of a [4Fe-4S] cluster on the scaffold complex cfd1-nbp35. Electrons are transferred to dre2 from NADPH via the FAD- and FMN-containing protein tah18. Tah18-dre2 are also required for the assembly of the diferric tyrosyl radical cofactor of ribonucleotide reductase (RNR), probably by providing electrons for reduction during radical cofactor maturation in the catalytic small subunit rnr2. This chain is Fe-S cluster assembly protein dre2, found in Emericella nidulans (strain FGSC A4 / ATCC 38163 / CBS 112.46 / NRRL 194 / M139) (Aspergillus nidulans).